Here is a 116-residue protein sequence, read N- to C-terminus: Large ribosomal subunit protein uL18 (116 aa).

Belongs to the universal ribosomal protein uL18 family. As to quaternary structure, part of the 50S ribosomal subunit; part of the 5S rRNA/L5/L18/L25 subcomplex. Contacts the 5S and 23S rRNAs.

Its function is as follows. This is one of the proteins that bind and probably mediate the attachment of the 5S RNA into the large ribosomal subunit, where it forms part of the central protuberance. This is Large ribosomal subunit protein uL18 from Chromohalobacter salexigens (strain ATCC BAA-138 / DSM 3043 / CIP 106854 / NCIMB 13768 / 1H11).